Consider the following 164-residue polypeptide: UPF0262 protein Nham_0287 (164 aa).

The protein belongs to the UPF0262 family.

The chain is UPF0262 protein Nham_0287 from Nitrobacter hamburgensis (strain DSM 10229 / NCIMB 13809 / X14).